Here is a 123-residue protein sequence, read N- to C-terminus: Small ribosomal subunit protein uS13 (123 aa).

The tract at residues 94–123 (GLPVRGQSTKSNARTRKGPRKTVAGKKSTK) is disordered. A compositionally biased stretch (basic residues) spans 106 to 123 (ARTRKGPRKTVAGKKSTK).

The protein belongs to the universal ribosomal protein uS13 family. Part of the 30S ribosomal subunit. Forms a loose heterodimer with protein S19. Forms two bridges to the 50S subunit in the 70S ribosome.

In terms of biological role, located at the top of the head of the 30S subunit, it contacts several helices of the 16S rRNA. In the 70S ribosome it contacts the 23S rRNA (bridge B1a) and protein L5 of the 50S subunit (bridge B1b), connecting the 2 subunits; these bridges are implicated in subunit movement. Contacts the tRNAs in the A and P-sites. This Mycoplasmopsis agalactiae (strain NCTC 10123 / CIP 59.7 / PG2) (Mycoplasma agalactiae) protein is Small ribosomal subunit protein uS13.